The primary structure comprises 240 residues: 1-(5-phosphoribosyl)-5-[(5-phosphoribosylamino)methylideneamino] imidazole-4-carboxamide isomerase (240 aa).

The active-site Proton acceptor is the Asp-8. Asp-129 serves as the catalytic Proton donor.

The protein belongs to the HisA/HisF family.

It is found in the cytoplasm. It carries out the reaction 1-(5-phospho-beta-D-ribosyl)-5-[(5-phospho-beta-D-ribosylamino)methylideneamino]imidazole-4-carboxamide = 5-[(5-phospho-1-deoxy-D-ribulos-1-ylimino)methylamino]-1-(5-phospho-beta-D-ribosyl)imidazole-4-carboxamide. The protein operates within amino-acid biosynthesis; L-histidine biosynthesis; L-histidine from 5-phospho-alpha-D-ribose 1-diphosphate: step 4/9. The protein is 1-(5-phosphoribosyl)-5-[(5-phosphoribosylamino)methylideneamino] imidazole-4-carboxamide isomerase of Clostridioides difficile (strain 630) (Peptoclostridium difficile).